We begin with the raw amino-acid sequence, 272 residues long: Dermonecrotic toxin LvSicTox-alphaIC1aiii (272 aa).

His4 is a catalytic residue. Residues Glu24 and Asp26 each coordinate Mg(2+). Catalysis depends on His40, which acts as the Nucleophile. 2 disulfide bridges follow: Cys44/Cys50 and Cys46/Cys189. Position 84 (Asp84) interacts with Mg(2+).

Belongs to the arthropod phospholipase D family. Class II subfamily. Mg(2+) serves as cofactor. As to expression, expressed by the venom gland.

It is found in the secreted. It catalyses the reaction an N-(acyl)-sphingosylphosphocholine = an N-(acyl)-sphingosyl-1,3-cyclic phosphate + choline. The enzyme catalyses an N-(acyl)-sphingosylphosphoethanolamine = an N-(acyl)-sphingosyl-1,3-cyclic phosphate + ethanolamine. It carries out the reaction a 1-acyl-sn-glycero-3-phosphocholine = a 1-acyl-sn-glycero-2,3-cyclic phosphate + choline. The catalysed reaction is a 1-acyl-sn-glycero-3-phosphoethanolamine = a 1-acyl-sn-glycero-2,3-cyclic phosphate + ethanolamine. In terms of biological role, dermonecrotic toxins cleave the phosphodiester linkage between the phosphate and headgroup of certain phospholipids (sphingolipid and lysolipid substrates), forming an alcohol (often choline) and a cyclic phosphate. This toxin acts on sphingomyelin (SM). It may also act on ceramide phosphoethanolamine (CPE), lysophosphatidylcholine (LPC) and lysophosphatidylethanolamine (LPE), but not on lysophosphatidylserine (LPS), and lysophosphatidylglycerol (LPG). It acts by transphosphatidylation, releasing exclusively cyclic phosphate products as second products. Induces dermonecrosis, hemolysis, increased vascular permeability, edema, inflammatory response, and platelet aggregation. The polypeptide is Dermonecrotic toxin LvSicTox-alphaIC1aiii (Loxosceles variegata (Recluse spider)).